The following is a 47-amino-acid chain: Large ribosomal subunit protein bL34 (47 aa).

This sequence belongs to the bacterial ribosomal protein bL34 family.

In Mycobacterium ulcerans (strain Agy99), this protein is Large ribosomal subunit protein bL34.